Reading from the N-terminus, the 532-residue chain is Collagen alpha-1(XXIII) chain (532 aa).

Over 1 to 23 the chain is Cytoplasmic; the sequence is MGAGERAAGGGGAQDPGAGCGSR. The helical; Signal-anchor for type II membrane protein transmembrane segment at 24-45 threads the bilayer; sequence ALSALCLLLSVGSAAACLLLGA. At 46 to 532 the chain is on the extracellular side; that stretch reads QAAALHGRVA…GLPVPGCWHK (487 aa). Disordered regions lie at residues 102–296 and 308–532; these read PSEC…GEQG and LDAL…CWHK. 4 consecutive Collagen-like domains span residues 108–166, 173–232, 240–298, and 313–372; these read PPGP…RGAQ, GPPG…PGKK, QPGL…QGDT, and GPPG…MGLS. Residues 129-145 show a composition bias toward low complexity; that stretch reads QSGRDGYPGPLGLDGKP. Pro residues predominate over residues 174-184; sequence PPGPPGPPGAR. Positions 196 to 207 are enriched in low complexity; it reads RGAQGPAGPRGE. The span at 314-326 shows a compositional bias: pro residues; that stretch reads PPGPQGAPGPPGI. Composition is skewed to basic and acidic residues over residues 342-354 and 380-393; these read DGEKGPKGPKGDP and PKGEKGESASDHLQ. Residues 403-414 show a composition bias toward pro residues; the sequence is PGPPGPPGPPGP. Collagen-like domains are found at residues 404-452 and 455-514; these read GPPG…GPPG and GLPG…PGLD. Basic and acidic residues-rich tracts occupy residues 427 to 441 and 478 to 495; these read DGAKGEKGTSGERGP and RGEKGDRSERGEKGERGV.

In terms of assembly, homotrimer. Undergoes proteolytic cleavage by furin protease to yield a 60 kDa soluble form that forms a homotrimer and exhibits a low affinity interaction with heparin.

It localises to the cell membrane. The protein is Collagen alpha-1(XXIII) chain (Col23a1) of Mus musculus (Mouse).